The sequence spans 475 residues: Putative aldehyde dehydrogenase (475 aa).

Residues 146-147 (WN) and 223-224 (GS) each bind NAD(+). Catalysis depends on E245, which acts as the Proton acceptor. Residue L246 coordinates NAD(+). C279 acts as the Nucleophile in catalysis. An NAD(+)-binding site is contributed by E379.

This sequence belongs to the aldehyde dehydrogenase family.

The catalysed reaction is an aldehyde + NAD(+) + H2O = a carboxylate + NADH + 2 H(+). This Staphylococcus aureus (strain bovine RF122 / ET3-1) protein is Putative aldehyde dehydrogenase.